Consider the following 306-residue polypeptide: Glutaminase (306 aa).

Substrate contacts are provided by serine 62, asparagine 114, glutamate 159, asparagine 166, tyrosine 190, tyrosine 242, and valine 260.

Belongs to the glutaminase family. In terms of assembly, homotetramer.

It carries out the reaction L-glutamine + H2O = L-glutamate + NH4(+). In Clostridium tetani (strain Massachusetts / E88), this protein is Glutaminase.